Consider the following 498-residue polypeptide: Glycerol kinase (498 aa).

ADP is bound at residue T12. Positions 12, 13, and 14 each coordinate ATP. T12 serves as a coordination point for sn-glycerol 3-phosphate. Residue R16 participates in ADP binding. R82, E83, and Y134 together coordinate sn-glycerol 3-phosphate. 3 residues coordinate glycerol: R82, E83, and Y134. At H230 the chain carries Phosphohistidine; by HPr. D244 lines the sn-glycerol 3-phosphate pocket. Glycerol-binding residues include D244 and Q245. ADP-binding residues include T266 and G309. T266, G309, Q313, and G410 together coordinate ATP. 2 residues coordinate ADP: G410 and N414.

Belongs to the FGGY kinase family. In terms of assembly, homotetramer and homodimer (in equilibrium). The phosphoenolpyruvate-dependent sugar phosphotransferase system (PTS), including enzyme I, and histidine-containing protein (HPr) are required for the phosphorylation, which leads to the activation of the enzyme.

The enzyme catalyses glycerol + ATP = sn-glycerol 3-phosphate + ADP + H(+). It functions in the pathway polyol metabolism; glycerol degradation via glycerol kinase pathway; sn-glycerol 3-phosphate from glycerol: step 1/1. Its activity is regulated as follows. Activated by phosphorylation and inhibited by fructose 1,6-bisphosphate (FBP). Its function is as follows. Key enzyme in the regulation of glycerol uptake and metabolism. Catalyzes the phosphorylation of glycerol to yield sn-glycerol 3-phosphate. In Staphylococcus aureus (strain MW2), this protein is Glycerol kinase.